We begin with the raw amino-acid sequence, 700 residues long: Long-chain-fatty-acid--CoA ligase 1 (700 aa).

A disordered region spans residues 1 to 21; sequence MVAQYTVPVGKAANEHETAPR. Lys189 participates in a covalent cross-link: Glycyl lysine isopeptide (Lys-Gly) (interchain with G-Cter in ubiquitin). 269–280 serves as a coordination point for ATP; it reads YTSGSTGEPKGV. The FACS motif lies at 531-580; that stretch reads DGWFKTGDIGEWEANGHLKIIDRKKNLVKTMNGEYIALEKLESVYRSNEY.

Belongs to the ATP-dependent AMP-binding enzyme family. Interacts with FAT1. Mg(2+) serves as cofactor.

It localises to the lipid droplet. The protein resides in the cell membrane. It catalyses the reaction a long-chain fatty acid + ATP + CoA = a long-chain fatty acyl-CoA + AMP + diphosphate. The catalysed reaction is (9Z)-octadecenoate + ATP + CoA = (9Z)-octadecenoyl-CoA + AMP + diphosphate. It carries out the reaction hexadecanoate + ATP + CoA = hexadecanoyl-CoA + AMP + diphosphate. The enzyme catalyses (9Z)-hexadecenoate + ATP + CoA = (9Z)-hexadecenoyl-CoA + AMP + diphosphate. It catalyses the reaction tetradecanoate + ATP + CoA = tetradecanoyl-CoA + AMP + diphosphate. The catalysed reaction is (9Z)-tetradecenoate + ATP + CoA = (9Z)-tetradecenoyl-CoA + AMP + diphosphate. It carries out the reaction (9Z,12Z)-octadecadienoate + ATP + CoA = (9Z,12Z)-octadecadienoyl-CoA + AMP + diphosphate. The enzyme catalyses dodecanoate + ATP + CoA = dodecanoyl-CoA + AMP + diphosphate. It catalyses the reaction pentadecanoate + ATP + CoA = pentadecanoyl-CoA + AMP + diphosphate. The catalysed reaction is undecanoate + ATP + CoA = undecanoyl-CoA + AMP + diphosphate. It carries out the reaction heptadecanoate + ATP + CoA = heptadecanoyl-CoA + AMP + diphosphate. The enzyme catalyses octadecanoate + ATP + CoA = octadecanoyl-CoA + AMP + diphosphate. Functionally, activates long-chain fatty acids (LCFA) by esterification of the fatty acids into metabolically active CoA-thioesters for subsequent degradation or incorporation into phospholipids. Also facilitates the transport of LCFAs into the cell, either by active transport or by decreasing the intracellular LCFA concentration. It may supplement intracellular myristoyl-CoA pools from exogenous myristate. Preferentially acts on C12:0-C16:0 fatty acids with myristic and pentadecanic acid (C15:0) having the highest activities. Also involved in long-chain base (LCB) uptake of sphingolipids. In contrast ot LCFA uptake, LCB uptake does not require ATP, suggesting that the enzyme is directly involved in active LCB uptake. Involved in the sphingolipid-to-glycerolipid metabolic pathway, converting the sphingolipid metabolite hexadecenoic acid to hexadecenoyl-CoA, which is then further converted to glycerolipids. This chain is Long-chain-fatty-acid--CoA ligase 1 (FAA1), found in Saccharomyces cerevisiae (strain ATCC 204508 / S288c) (Baker's yeast).